Reading from the N-terminus, the 654-residue chain is Myrosinase-binding protein 2 (654 aa).

4 Jacalin-type lectin domains span residues 2–151 (SEKV…HFFA), 156–291 (LKHF…HFAP), 346–489 (PNKV…YFAP), and 502–645 (AKKL…HAVP). The segment covering 314–346 (VPAPSPAPAPSPAPAPAPAPAPAPTPAPAPAPP) has biased composition (pro residues). Residues 314–355 (VPAPSPAPAPSPAPAPAPAPAPAPTPAPAPAPPNKVEALGGN) form a disordered region.

This sequence belongs to the jacalin lectin family. Expressed in flowers. Detected mainly in ovules and styles of immature flowers, but also in pistils, styles, stamens, petals and embryos. Not detected in leaves.

The protein is Myrosinase-binding protein 2 (MBP2) of Arabidopsis thaliana (Mouse-ear cress).